The following is a 798-amino-acid chain: Phenylalanine--tRNA ligase beta subunit (798 aa).

Positions 39-147 (AARLAGFTLA…PSGEVGERFI (109 aa)) constitute a tRNA-binding domain. Positions 404–475 (DHSRAYKLDA…RIASLTKLVG (72 aa)) constitute a B5 domain. The Mg(2+) site is built by Asp-453, Asp-459, Glu-462, and Glu-463. Positions 704–797 (RDLQAVERDF…VAKATGGTLR (94 aa)) constitute an FDX-ACB domain.

It belongs to the phenylalanyl-tRNA synthetase beta subunit family. Type 1 subfamily. In terms of assembly, tetramer of two alpha and two beta subunits. It depends on Mg(2+) as a cofactor.

It is found in the cytoplasm. It catalyses the reaction tRNA(Phe) + L-phenylalanine + ATP = L-phenylalanyl-tRNA(Phe) + AMP + diphosphate + H(+). The sequence is that of Phenylalanine--tRNA ligase beta subunit from Ruegeria pomeroyi (strain ATCC 700808 / DSM 15171 / DSS-3) (Silicibacter pomeroyi).